Consider the following 196-residue polypeptide: ATP-dependent Clp protease proteolytic subunit (196 aa).

S101 acts as the Nucleophile in catalysis. H126 is an active-site residue.

Belongs to the peptidase S14 family. In terms of assembly, component of the chloroplastic Clp protease core complex.

It localises to the plastid. Its subcellular location is the chloroplast stroma. The enzyme catalyses Hydrolysis of proteins to small peptides in the presence of ATP and magnesium. alpha-casein is the usual test substrate. In the absence of ATP, only oligopeptides shorter than five residues are hydrolyzed (such as succinyl-Leu-Tyr-|-NHMec, and Leu-Tyr-Leu-|-Tyr-Trp, in which cleavage of the -Tyr-|-Leu- and -Tyr-|-Trp bonds also occurs).. Its function is as follows. Cleaves peptides in various proteins in a process that requires ATP hydrolysis. Has a chymotrypsin-like activity. Plays a major role in the degradation of misfolded proteins. This is ATP-dependent Clp protease proteolytic subunit from Eucalyptus globulus subsp. globulus (Tasmanian blue gum).